Here is a 210-residue protein sequence, read N- to C-terminus: MASAKDIKKSILAPVLDNNPIALQVLGVCSALAVTTKLETAFVMTLAVMFVTALSNLFVSLIRNHMPNSVRIIVQMAIIASLVIVVDQVLKAYLYDISKQLSVFVSLIITNCIVMGRAEAFAMKSAPFPSFIDGIGNGLGYGFVLMTVAFFRELLGSGKLFGVEVLPLVSNGGWYQPNGLMLLAPSAFFLIGFMIWAIRILKPEQVEAKE.

Helical transmembrane passes span 42–62, 72–92, 103–123, 131–151, and 178–198; these read FVMT…VSLI, IIVQ…VLKA, VFVS…AFAM, FIDG…VAFF, and NGLM…IWAI.

Belongs to the NqrDE/RnfAE family. Composed of six subunits; NqrA, NqrB, NqrC, NqrD, NqrE and NqrF.

It localises to the cell inner membrane. It catalyses the reaction a ubiquinone + n Na(+)(in) + NADH + H(+) = a ubiquinol + n Na(+)(out) + NAD(+). Functionally, NQR complex catalyzes the reduction of ubiquinone-1 to ubiquinol by two successive reactions, coupled with the transport of Na(+) ions from the cytoplasm to the periplasm. NqrA to NqrE are probably involved in the second step, the conversion of ubisemiquinone to ubiquinol. This Aliivibrio fischeri (strain ATCC 700601 / ES114) (Vibrio fischeri) protein is Na(+)-translocating NADH-quinone reductase subunit D.